The sequence spans 194 residues: Large ribosomal subunit protein eL15 (194 aa).

The interval 164–194 is disordered; the sequence is SAGKKGRGLRNKGKGAEKVRPSVRANKGKTK. Positions 167–176 are enriched in basic residues; it reads KKGRGLRNKG.

Belongs to the eukaryotic ribosomal protein eL15 family.

This is Large ribosomal subunit protein eL15 from Thermococcus gammatolerans (strain DSM 15229 / JCM 11827 / EJ3).